Reading from the N-terminus, the 536-residue chain is Protoporphyrinogen oxidase, chloroplastic (536 aa).

Residues 1 to 36 (MAAAAAAMATATSATAAPPLRIRDAARRTRRRGHVR) constitute a chloroplast transit peptide. Residues 62 to 67 (GGGISG), 87 to 88 (EA), and 111 to 114 (GPNS) each bind FAD. Positions 248–272 (TIKTIQERGKNPKPPRDPRLPTPKG) are disordered. The segment covering 252–266 (IQERGKNPKPPRDPR) has biased composition (basic and acidic residues). Position 510 to 512 (510 to 512 (VAL)) interacts with FAD.

This sequence belongs to the protoporphyrinogen/coproporphyrinogen oxidase family. Protoporphyrinogen oxidase subfamily. It depends on FAD as a cofactor.

It localises to the plastid. It is found in the chloroplast. It catalyses the reaction protoporphyrinogen IX + 3 O2 = protoporphyrin IX + 3 H2O2. Its pathway is porphyrin-containing compound metabolism; protoporphyrin-IX biosynthesis; protoporphyrin-IX from protoporphyrinogen-IX: step 1/1. The protein operates within porphyrin-containing compound metabolism; chlorophyll biosynthesis. Its function is as follows. Catalyzes the 6-electron oxidation of protoporphyrinogen-IX to form protoporphyrin-IX. In Oryza sativa subsp. japonica (Rice), this protein is Protoporphyrinogen oxidase, chloroplastic (PPOX1).